A 348-amino-acid polypeptide reads, in one-letter code: Elongation factor Ts (348 aa).

The interval 82-85 (TDFV) is involved in Mg(2+) ion dislocation from EF-Tu.

It belongs to the EF-Ts family.

It is found in the cytoplasm. In terms of biological role, associates with the EF-Tu.GDP complex and induces the exchange of GDP to GTP. It remains bound to the aminoacyl-tRNA.EF-Tu.GTP complex up to the GTP hydrolysis stage on the ribosome. The protein is Elongation factor Ts of Aliarcobacter butzleri (strain RM4018) (Arcobacter butzleri).